Consider the following 325-residue polypeptide: Protein ORANGE-ORANGE, chloroplastic (325 aa).

The transit peptide at 1–54 directs the protein to the chloroplast; that stretch reads MDRVLVASYPINHLIRPHSFRIDYCWSTCFTSRLNSGKERQKLSSRWRWRSMAS. Low complexity predominate over residues 53 to 71; the sequence is ASDSTDSSSSSSFAPSVES. Positions 53–77 are disordered; sequence ASDSTDSSSSSSFAPSVESDPSDKT. Transmembrane regions (helical) follow at residues 164-184 and 217-237; these read LYYV…GLLA and IVAS…VVEV. Residues 226–317 form a CR-type-like region; that stretch reads VGVISALMVV…CTGMAMASEH (92 aa). The stretch at 248 to 255 is one CXXCXGXG motif repeat; that stretch reads CKYCLGTG. Residues 259 to 266 form a CXXCXXXG motif repeat; sequence CARCSNTG. Residues 292–299 form a CXXCXGXG motif repeat; that stretch reads CQNCSGSG. One copy of the CXXCXXXG motif repeat lies at 303-310; that stretch reads CPTCLCTG.

This sequence belongs to the orange-like family.

It localises to the plastid. The protein localises to the chloroplast membrane. In terms of biological role, triggers accumulation of carotenoids, mainly beta-carotene, in fruit flesh. The polypeptide is Protein ORANGE-ORANGE, chloroplastic (Cucumis melo (Muskmelon)).